A 499-amino-acid polypeptide reads, in one-letter code: MSLADELLADLEEAAEEEEGGSYGEEEEEPAIEDVQEETQLDLSGDSVKTIAKLWDSKMFAEIMMKIEEYISKQAKASEVMGPVEAAPEYRVIVDANNLTVEIENELNIIHKFIRDKYSKRFPELESLVPNALDYIRTVKELGNSLDKCKNNENLQQILTNATIMVVSVTASTTQGQQLSEEELERLEEACDMALELNASKHRIYEYVESRMSFIAPNLSIIIGASTAAKIMGVAGGLTNLSKMPACNIMLLGAQRKTLSGFSSTSVLPHTGYIYHSDIVQSLPPDLRRKAARLVAAKCTLAARVDSFHESTEGKVGYELKDEIERKFDKWQEPPPVKQVKPLPAPLDGQRKKRGGRRYRKMKERLGLTEIRKQANRMSFGEIEEDAYQEDLGFSLGHLGKSGSGRVRQTQVNEATKARISKTLQRTLQKQSVVYGGKSTIRDRSSGTASSVAFTPLQGLEIVNPQAAEKKVAEANQKYFSSMAEFLKVKGEKSGLMST.

The tract at residues 1 to 37 is disordered; sequence MSLADELLADLEEAAEEEEGGSYGEEEEEPAIEDVQE. Residues 7–37 are compositionally biased toward acidic residues; the sequence is LLADLEEAAEEEEGGSYGEEEEEPAIEDVQE. Coiled-coil stretches lie at residues 85–120 and 181–215; these read EAAP…KYSK and EEEL…MSFI. Residues 215–333 form the Nop domain; sequence IAPNLSIIIG…IERKFDKWQE (119 aa). Residues 334 to 357 are disordered; the sequence is PPPVKQVKPLPAPLDGQRKKRGGR. Positions 351-364 match the Nuclear localization signal (NLS) motif; it reads RKKRGGRRYRKMKE. Phosphoserine occurs at positions 379, 395, and 432. Lysine 438 carries the post-translational modification N6-acetyllysine. Serine 439 carries the post-translational modification Phosphoserine. The residue at position 440 (threonine 440) is a Phosphothreonine. Serine 450 carries the phosphoserine modification. Threonine 455 is modified (phosphothreonine). Glycyl lysine isopeptide (Lys-Gly) (interchain with G-Cter in SUMO2) cross-links involve residues lysine 471 and lysine 478.

The protein belongs to the PRP31 family. Identified in the spliceosome B complex. Component of the U4/U6-U5 tri-snRNP complex composed of the U4, U6 and U5 snRNAs and at least PRPF3, PRPF4, PRPF6, PRPF8, PRPF31, SNRNP200, TXNL4A, SNRNP40, DDX23, CD2BP2, PPIH, SNU13, EFTUD2, SART1 and USP39. Interacts with a complex formed by SNU13 and U4 snRNA, but not with SNU13 or U4 snRNA alone. The complex formed by SNU13 and PRPF31 also binds U4atac snRNA, a characteristic component of specific, less abundant spliceosomal complexes. Interacts with PRPF6/U5 snRNP-associated 102 kDa protein. Component of some MLL1/MLL complex, at least composed of the core components KMT2A/MLL1, ASH2L, HCFC1/HCF1, WDR5 and RBBP5, as well as the facultative components BACC1, CHD8, E2F6, HSP70, INO80C, KANSL1, LAS1L, MAX, MCRS1, MGA, KAT8/MOF, PELP1, PHF20, PRP31, RING2, RUVB1/TIP49A, RUVB2/TIP49B, SENP3, TAF1, TAF4, TAF6, TAF7, TAF9 and TEX10. Interacts (via its NLS) with CTNNBL1. Interacts with USH1G. Phosphorylated by PRP4K during spliceosome assembly. In terms of tissue distribution, ubiquitously expressed.

It is found in the nucleus. The protein localises to the nucleus speckle. Its subcellular location is the cajal body. Its function is as follows. Involved in pre-mRNA splicing as component of the spliceosome. Required for the assembly of the U4/U5/U6 tri-snRNP complex, one of the building blocks of the spliceosome. The chain is U4/U6 small nuclear ribonucleoprotein Prp31 from Homo sapiens (Human).